A 196-amino-acid polypeptide reads, in one-letter code: Mpv17-like protein (196 aa).

The Cytoplasmic portion of the chain corresponds to 1 to 16 (MVSWWQALTRAAGRYP). The interval 16–55 (PWPANVLLYAGFFSGGDALQQVLRGGPADWQHTRHVATVA) is targeting to peroxisomes. A helical transmembrane segment spans residues 17–34 (WPANVLLYAGFFSGGDAL). Residues 35 to 50 (QQVLRGGPADWQHTRH) lie on the Lumenal side of the membrane. The chain crosses the membrane as a helical span at residues 51–67 (VATVAVAFHANLNYVWL). Over 68–90 (NLLERALPGRAPRTILAKVLCDQ) the chain is Cytoplasmic. The helical transmembrane segment at 91 to 108 (ALGGPVYVSTFYAGMSIL) threads the bilayer. Residues 109–150 (QGKDDIFLDMRQKFWNTYKSGLMYWPFVQLINFSLIPIRWRT) are Lumenal-facing. The helical transmembrane segment at 151-167 (AYTGLCGFLWATFLCFS) threads the bilayer. Topologically, residues 168-196 (QQEGDGTFKSAFTFRRIKVTNEVEKPSEK) are cytoplasmic.

This sequence belongs to the peroxisomal membrane protein PXMP2/4 family.

It localises to the peroxisome membrane. Its function is as follows. Participates in reactive oxygen species metabolism by up- or down-regulation of the genes of antioxidant enzymes. Protective against the mitochondrial apoptotic cascade. In Bos taurus (Bovine), this protein is Mpv17-like protein (MPV17L).